The chain runs to 261 residues: Hemin import ATP-binding protein HmuV (261 aa).

In terms of domain architecture, ABC transporter spans 2 to 243 (LCANNVSAQI…ALLKRVYNIN (242 aa)). 34 to 41 (GPNGAGKS) provides a ligand contact to ATP.

Belongs to the ABC transporter superfamily. Heme (hemin) importer (TC 3.A.1.14.5) family. The complex is composed of two ATP-binding proteins (HmuV), two transmembrane proteins (HmuU) and a solute-binding protein (HmuT).

It localises to the cell inner membrane. In terms of biological role, part of the ABC transporter complex HmuTUV involved in hemin import. Responsible for energy coupling to the transport system. In Pseudoalteromonas translucida (strain TAC 125), this protein is Hemin import ATP-binding protein HmuV.